A 190-amino-acid polypeptide reads, in one-letter code: Tegument antigen (190 aa).

2 EF-hand domains span residues 8 to 43 (SQMEEFIRAFLEIDADSNEMIDKQELIKYCQKYRLD) and 51 to 77 (IARFDTDKDNKISIEEFCRGFGLKVSE). Aspartate 55, aspartate 57, aspartate 59, lysine 61, and glutamate 66 together coordinate Ca(2+).

As to expression, adult and schistosomula tegument.

This is Tegument antigen from Schistosoma mansoni (Blood fluke).